Reading from the N-terminus, the 516-residue chain is GMP synthase [glutamine-hydrolyzing] (516 aa).

The 193-residue stretch at 6 to 198 folds into the Glutamine amidotransferase type-1 domain; that stretch reads KVIIVDYGSQ…LFKIAGIKAD (193 aa). Catalysis depends on Cys83, which acts as the Nucleophile. Catalysis depends on residues His172 and Glu174. Positions 199–391 constitute a GMPS ATP-PPase domain; sequence WSMSSFCERV…LGLPDFIVWR (193 aa). 227-233 is a binding site for ATP; sequence SGGIDST.

Homodimer.

The enzyme catalyses XMP + L-glutamine + ATP + H2O = GMP + L-glutamate + AMP + diphosphate + 2 H(+). Its pathway is purine metabolism; GMP biosynthesis; GMP from XMP (L-Gln route): step 1/1. Functionally, catalyzes the synthesis of GMP from XMP. In Oleidesulfovibrio alaskensis (strain ATCC BAA-1058 / DSM 17464 / G20) (Desulfovibrio alaskensis), this protein is GMP synthase [glutamine-hydrolyzing].